The chain runs to 418 residues: UDP-N-acetylglucosamine 1-carboxyvinyltransferase (418 aa).

A phosphoenolpyruvate-binding site is contributed by 22–23; the sequence is KN. Residue arginine 92 coordinates UDP-N-acetyl-alpha-D-glucosamine. Cysteine 116 functions as the Proton donor in the catalytic mechanism. Cysteine 116 carries the 2-(S-cysteinyl)pyruvic acid O-phosphothioketal modification. Positions 305 and 327 each coordinate UDP-N-acetyl-alpha-D-glucosamine.

The protein belongs to the EPSP synthase family. MurA subfamily.

Its subcellular location is the cytoplasm. The catalysed reaction is phosphoenolpyruvate + UDP-N-acetyl-alpha-D-glucosamine = UDP-N-acetyl-3-O-(1-carboxyvinyl)-alpha-D-glucosamine + phosphate. Its pathway is cell wall biogenesis; peptidoglycan biosynthesis. Cell wall formation. Adds enolpyruvyl to UDP-N-acetylglucosamine. In Endomicrobium trichonymphae, this protein is UDP-N-acetylglucosamine 1-carboxyvinyltransferase.